A 198-amino-acid chain; its full sequence is dITP/XTP pyrophosphatase (198 aa).

Residue 11–16 (THNPGK) coordinates substrate. E44 and D73 together coordinate Mg(2+). D73 acts as the Proton acceptor in catalysis. Substrate contacts are provided by residues S74, 156 to 159 (FGYD), K179, and 184 to 185 (HR).

The protein belongs to the HAM1 NTPase family. Homodimer. It depends on Mg(2+) as a cofactor.

The catalysed reaction is XTP + H2O = XMP + diphosphate + H(+). It catalyses the reaction dITP + H2O = dIMP + diphosphate + H(+). It carries out the reaction ITP + H2O = IMP + diphosphate + H(+). Its function is as follows. Pyrophosphatase that catalyzes the hydrolysis of nucleoside triphosphates to their monophosphate derivatives, with a high preference for the non-canonical purine nucleotides XTP (xanthosine triphosphate), dITP (deoxyinosine triphosphate) and ITP. Seems to function as a house-cleaning enzyme that removes non-canonical purine nucleotides from the nucleotide pool, thus preventing their incorporation into DNA/RNA and avoiding chromosomal lesions. The sequence is that of dITP/XTP pyrophosphatase (ysnA) from Bacillus subtilis (strain 168).